The following is a 174-amino-acid chain: CDP-archaeol synthase (174 aa).

The next 5 helical transmembrane spans lie at 14-34 (ILEA…PVVA), 59-79 (IEGL…AALA), 83-103 (MLLA…DMAG), 118-138 (APLL…IALG), and 149-169 (AAAA…LLGL).

It belongs to the CDP-archaeol synthase family. It depends on Mg(2+) as a cofactor.

It localises to the cell membrane. It carries out the reaction 2,3-bis-O-(geranylgeranyl)-sn-glycerol 1-phosphate + CTP + H(+) = CDP-2,3-bis-O-(geranylgeranyl)-sn-glycerol + diphosphate. It participates in membrane lipid metabolism; glycerophospholipid metabolism. Its function is as follows. Catalyzes the formation of CDP-2,3-bis-(O-geranylgeranyl)-sn-glycerol (CDP-archaeol) from 2,3-bis-(O-geranylgeranyl)-sn-glycerol 1-phosphate (DGGGP) and CTP. This reaction is the third ether-bond-formation step in the biosynthesis of archaeal membrane lipids. The chain is CDP-archaeol synthase from Aeropyrum pernix (strain ATCC 700893 / DSM 11879 / JCM 9820 / NBRC 100138 / K1).